We begin with the raw amino-acid sequence, 563 residues long: Cytochrome P450 monooxygenase efuG (563 aa).

The helical transmembrane segment at 10 to 30 (ITSHQWGIGSVFLLISIPLIV) threads the bilayer. Residues 462-482 (PDDPQSGPRKDAKKQKAKSDG) are disordered. Position 505 (C505) interacts with heme.

The protein belongs to the cytochrome P450 family. The cofactor is heme.

It is found in the membrane. It participates in secondary metabolite biosynthesis; terpenoid biosynthesis. Functionally, cytochrome P450 monooxygenase; part of the gene cluster that mediates the biosynthesis of enfumafungin, a glycosylated fernene-type triterpenoid with potent antifungal activity, mediated by its interaction with beta-1,3-glucan synthase and the fungal cell wall. The pathway begins with the terpene cyclase-glycosyl transferase fusion protein that most likely uses 2,3-oxidosqualene as substrate and catalyzes glycosylation immediately after cyclization. The fernene glycoside then could be processed by the desaturase efuI which catalyzes isomerization of a double bond established by efuA to form the core structure. The latter would then undergo a series of hydroxylations in unknown order at C-2, C-19, C-23 and C-25, which would be catalyzed by two of the three cytochrome P450 monooxygenases efuB, efuG or efuH. The hydroxy-group at C-25 becomes oxidized by the dehydrogenase efuE to enable a spontaneous, non-enzymatic hemiacetal formation with C-23. After hydroxylation at C-2, acetylation by the acetyltransferase efuC takes place. The final steps in enfumafungin biosynthesis require expansion of the 5-membered ring by lactonization via a Baeyer-Villiger reaction mediated by one of the BGC's cytochrome P450 monooxygenases (efuB, efuG or efuH) followed by ring cleavage. This type of reaction would establish a double bond between C-20 and C-21 which could be reduced by the reductase efuL to form the final product. The chain is Cytochrome P450 monooxygenase efuG from Hormonema carpetanum.